The chain runs to 297 residues: HTH-type transcriptional regulator ArgP (297 aa).

The HTH lysR-type domain occupies 4–60 (PDYRTLQALDAVIRERGFERAAQKLCITQSAVSQRIKQLENMFGQPLLVRTVPPRPT). The segment at residues 21 to 40 (FERAAQKLCITQSAVSQRIK) is a DNA-binding region (H-T-H motif).

Belongs to the LysR transcriptional regulatory family. In terms of assembly, homodimer.

Functionally, controls the transcription of genes involved in arginine and lysine metabolism. In Citrobacter koseri (strain ATCC BAA-895 / CDC 4225-83 / SGSC4696), this protein is HTH-type transcriptional regulator ArgP.